A 186-amino-acid chain; its full sequence is Inosine/xanthosine triphosphatase (186 aa).

Residue Q75 participates in Mg(2+) binding.

Belongs to the YjjX NTPase family. As to quaternary structure, homodimer. Requires Mg(2+) as cofactor. Mn(2+) is required as a cofactor.

The enzyme catalyses XTP + H2O = XDP + phosphate + H(+). The catalysed reaction is ITP + H2O = IDP + phosphate + H(+). In terms of biological role, phosphatase that hydrolyzes non-canonical purine nucleotides such as XTP and ITP to their respective diphosphate derivatives. Probably excludes non-canonical purines from DNA/RNA precursor pool, thus preventing their incorporation into DNA/RNA and avoiding chromosomal lesions. The polypeptide is Inosine/xanthosine triphosphatase (Shewanella baltica (strain OS195)).